The following is a 165-amino-acid chain: Small ribosomal subunit protein uS5 (165 aa).

Residues 10–73 (QIEKLISLNR…TSARKNLRFV (64 aa)) enclose the S5 DRBM domain.

Belongs to the universal ribosomal protein uS5 family. As to quaternary structure, part of the 30S ribosomal subunit. Contacts proteins S4 and S8.

In terms of biological role, with S4 and S12 plays an important role in translational accuracy. Located at the back of the 30S subunit body where it stabilizes the conformation of the head with respect to the body. The polypeptide is Small ribosomal subunit protein uS5 (Borreliella burgdorferi (strain ATCC 35210 / DSM 4680 / CIP 102532 / B31) (Borrelia burgdorferi)).